We begin with the raw amino-acid sequence, 196 residues long: N-(5'-phosphoribosyl)anthranilate isomerase (196 aa).

Belongs to the TrpF family.

The catalysed reaction is N-(5-phospho-beta-D-ribosyl)anthranilate = 1-(2-carboxyphenylamino)-1-deoxy-D-ribulose 5-phosphate. The protein operates within amino-acid biosynthesis; L-tryptophan biosynthesis; L-tryptophan from chorismate: step 3/5. The polypeptide is N-(5'-phosphoribosyl)anthranilate isomerase (Sulfurovum sp. (strain NBC37-1)).